The sequence spans 515 residues: 2-isopropylmalate synthase (515 aa).

Residues 4–266 (IKFFDTTLRD…ETRLNLQEIK (263 aa)) form the Pyruvate carboxyltransferase domain. 4 residues coordinate Mn(2+): Asp-13, His-201, His-203, and Asn-237. A regulatory domain region spans residues 391-515 (QLSSIQVQYG…RGENEKVATP (125 aa)).

The protein belongs to the alpha-IPM synthase/homocitrate synthase family. LeuA type 1 subfamily. Homodimer. The cofactor is Mn(2+).

It localises to the cytoplasm. It carries out the reaction 3-methyl-2-oxobutanoate + acetyl-CoA + H2O = (2S)-2-isopropylmalate + CoA + H(+). It participates in amino-acid biosynthesis; L-leucine biosynthesis; L-leucine from 3-methyl-2-oxobutanoate: step 1/4. Functionally, catalyzes the condensation of the acetyl group of acetyl-CoA with 3-methyl-2-oxobutanoate (2-ketoisovalerate) to form 3-carboxy-3-hydroxy-4-methylpentanoate (2-isopropylmalate). The chain is 2-isopropylmalate synthase from Geobacillus kaustophilus (strain HTA426).